Here is a 1173-residue protein sequence, read N- to C-terminus: DNA-directed RNA polymerase subunit beta (1173 aa).

This sequence belongs to the RNA polymerase beta chain family. In terms of assembly, the RNAP catalytic core consists of 2 alpha, 1 beta, 1 beta' and 1 omega subunit. When a sigma factor is associated with the core the holoenzyme is formed, which can initiate transcription.

It carries out the reaction RNA(n) + a ribonucleoside 5'-triphosphate = RNA(n+1) + diphosphate. Functionally, DNA-dependent RNA polymerase catalyzes the transcription of DNA into RNA using the four ribonucleoside triphosphates as substrates. The polypeptide is DNA-directed RNA polymerase subunit beta (Kosmotoga olearia (strain ATCC BAA-1733 / DSM 21960 / TBF 19.5.1)).